Reading from the N-terminus, the 136-residue chain is Large ribosomal subunit protein uL16 (136 aa).

This sequence belongs to the universal ribosomal protein uL16 family. As to quaternary structure, part of the 50S ribosomal subunit.

Binds 23S rRNA and is also seen to make contacts with the A and possibly P site tRNAs. The sequence is that of Large ribosomal subunit protein uL16 from Serratia proteamaculans (strain 568).